The chain runs to 307 residues: Synaptophysin (307 aa).

The Cytoplasmic segment spans residues 1 to 19 (MDVVNQLVAGGQFRVVKEP). The 208-residue stretch at 15–222 (VVKEPLGFVK…NLWFVFKETG (208 aa)) folds into the MARVEL domain. A helical transmembrane segment spans residues 20–43 (LGFVKVLQWVFAIFAFATCGSYTG). Topologically, residues 44-101 (ELRLSVECANKTESALNIEVEFEYPFRLHQVYFDAPSCVKGGTTKIFLVGDYSSSAEF) are vesicular. A glycan (N-linked (GlcNAc...) asparagine) is linked at N53. Y75 bears the Phosphotyrosine mark. A helical transmembrane segment spans residues 102 to 125 (FVTVAVFAFLYSMGALATYIFLQN). The Cytoplasmic portion of the chain corresponds to 126–132 (KYRENNK). Residues 133–156 (GPMMDFLATAVFAFMWLVSSSAWA) traverse the membrane as a helical segment. At 157–194 (KGLSDVKMATDPENIIKEMPMCRQTGNTCKELRDPVTS) the chain is on the vesicular side. The helical transmembrane segment at 195–218 (GLNTSVVFGFLNLVLWVGNLWFVF) threads the bilayer. Residues 219-307 (KETGWAAPFM…GAPTSFSNQM (89 aa)) lie on the Cytoplasmic side of the membrane. A Phosphothreonine modification is found at T221. The segment at 233–307 (GAPEKQPAPG…GAPTSFSNQM (75 aa)) is disordered. Over residues 248–258 (AGYGQGPGGYG) the composition is skewed to gly residues. Residues 249–298 (GYGQGPGGYGPQDSYGPQGGYQPDYGQPASGGGGYGPQGDYGQQGYGQQG) form a repeats, Gly-rich region. Positions 259–276 (PQDSYGPQGGYQPDYGQP) are enriched in low complexity. Y273 and Y289 each carry phosphotyrosine. The segment covering 277-296 (ASGGGGYGPQGDYGQQGYGQ) has biased composition (gly residues).

This sequence belongs to the synaptophysin/synaptobrevin family. In terms of assembly, homohexamer or homotetramer. Interacts with SRCIN1. Interacts with VAMP2; the interaction is inhibited by interaction of VAPM2 with SEPT8. Post-translationally, ubiquitinated; mediated by SIAH1 or SIAH2 and leading to its subsequent proteasomal degradation. Phosphorylated by SRC. As to expression, expressed in the brain with expression in the cerebrum and the cerebellum.

It is found in the cytoplasmic vesicle. It localises to the secretory vesicle. The protein localises to the synaptic vesicle membrane. The protein resides in the synapse. Its subcellular location is the synaptosome. Possibly involved in structural functions as organizing other membrane components or in targeting the vesicles to the plasma membrane. Involved in the regulation of short-term and long-term synaptic plasticity. This chain is Synaptophysin (Syp), found in Rattus norvegicus (Rat).